A 465-amino-acid polypeptide reads, in one-letter code: Anthocyanidin 3-O-glucosyltransferase 2 (465 aa).

H22 (proton acceptor) is an active-site residue. H22 and Q87 together coordinate an anthocyanidin. D122 functions as the Charge relay in the catalytic mechanism. T145 is a UDP-alpha-D-glucose binding site. An an anthocyanidin-binding site is contributed by H154. 7 residues coordinate UDP-alpha-D-glucose: A345, Q347, H362, W365, N366, S367, and E370. Residue G385 participates in an anthocyanidin binding. The UDP-alpha-D-glucose site is built by D386 and Q387.

It belongs to the UDP-glycosyltransferase family. As to expression, highest expression detected in fruit, with very low levels detected in petal and leaf.

It carries out the reaction an anthocyanidin + UDP-alpha-D-glucose + H(+) = an anthocyanidin 3-O-beta-D-glucoside + UDP. It catalyses the reaction pelargonidin + UDP-alpha-D-glucose = pelargonidin 3-O-beta-D-glucoside + UDP. The enzyme catalyses cyanidin + UDP-alpha-D-glucose = cyanidin 3-O-beta-D-glucoside + UDP + H(+). It participates in pigment biosynthesis; anthocyanin biosynthesis. In the presence of other necessary color factors, this glycosylation reaction allows the accumulation of anthocyanin pigments. Anthocyanidins are the preferred substrates, while flavonols are only a minor substrate in vitro. The chain is Anthocyanidin 3-O-glucosyltransferase 2 from Fragaria ananassa (Strawberry).